The sequence spans 1018 residues: MKKSKEAVFEDKDYTEENPEQIFGNLYDGKLTVQDGKVKIAYDGDGNGYYIAFNSETGVYYDPYGDTEYDISVLFDANGNSFVFADAPTVEVLAGEQEQTEAEPDYLQYVGNEAYGYYDEAGEWVWSGYFEGDQWISTLPQTEAEEKQFGFEDNIETTPTASEDFGLEADVPAPEVAEPSYEVQPEVAAEPVYDVQPEVAVEPVGETTATVEPQAVEIQPEVVVEPIVESQLEQPVEVQAEMVQPEVAVEPQLEVSLDPIGETAPILEQVEPQAVQTQPEIPAEQSAVELQPEPVAEVQSEMVQPEAAAEPVTEAQQTEPTPVVETIAEITPQVVTEPVVAVVEHQPEAVAEPLPVEPAVAGVSELIPTEQVQPEVVVESTPVAEVQSEMVQPEVAVEPIVEPQPEQPVEVQPEVITTPEVASVLEVQPENPVVEVEQVVEPQPETPVEVQPEPVVETVQEAVAEPTQVVEPQPQAAPQPAVYEWNLTPEAAPVEQPEVIPVTVVESQATATAEPQPAVAPVADMDYVLHLTDTVKNQPQTAPVQPTTPIKIEVAESTPTVTTSPVEPTIAPPLFEIELNNTTSSDLPLVEVVDFKHNQHGAVGTHSFDDFTPPEVGMESKTHCHSNSEVVWRVSEPKTVPVPPAVSSINIQTVNRVVEPTISTPTTPVVESAPAIEIFVDTPPVETKEASSNVDVVQQPVKPLMPVMVEQLRTTELQPTTEINLFANSDINSIIAELKQGRSNPAINFDDIFKMSSYQMVVKKSFVQISDFITNSKTDITNRFLLIKKELQAELTRLIEENEQLKAEFLNAKDLSVYQKDELLRSLSNDFTIAHRPSDSYEQLQKSGELVRNIQKAILENESKIKNIQITLKELKAVYKLCSDTVLNGMAKLDSVLRFNKKEKDPLLLNSMETLSSFETEPQAIIEDLLDFSSSFDKMSNEQLDEFVYQNLDSGLNLDLDGFDHQLSSMNIHGLEPLDPMKLDDFDFETLTPDKTSNLSSILDDELMENGGDFNLDY.

Coiled-coil stretches lie at residues 782 to 815 and 849 to 880; these read NRFL…AKDL and ELVR…AVYK.

In terms of processing, phosphorylated mainly on serine residues.

It is found in the cell projection. The protein localises to the attachment organelle membrane. Functionally, component of the cytoskeleton-like structure which stabilizes the shape of the wall-less Mycoplasma. This cytoskeleton-like network of accessory proteins containing HMW proteins 1 to 5 allows the proper anchoring of cytadhesin proteins in the mycoplasmal membrane at the attachment organelle. The polypeptide is Cytadherence high molecular weight protein 1 (hmw1) (Mycoplasma pneumoniae (strain ATCC 29342 / M129 / Subtype 1) (Mycoplasmoides pneumoniae)).